A 123-amino-acid chain; its full sequence is Small ribosomal subunit protein uS12 (123 aa).

D89 is subject to 3-methylthioaspartic acid.

It belongs to the universal ribosomal protein uS12 family. Part of the 30S ribosomal subunit. Contacts proteins S8 and S17. May interact with IF1 in the 30S initiation complex.

Its function is as follows. With S4 and S5 plays an important role in translational accuracy. Interacts with and stabilizes bases of the 16S rRNA that are involved in tRNA selection in the A site and with the mRNA backbone. Located at the interface of the 30S and 50S subunits, it traverses the body of the 30S subunit contacting proteins on the other side and probably holding the rRNA structure together. The combined cluster of proteins S8, S12 and S17 appears to hold together the shoulder and platform of the 30S subunit. This is Small ribosomal subunit protein uS12 from Citrifermentans bemidjiense (strain ATCC BAA-1014 / DSM 16622 / JCM 12645 / Bem) (Geobacter bemidjiensis).